The sequence spans 201 residues: dTTP/UTP pyrophosphatase (201 aa).

Residue Asp-81 is the Proton acceptor of the active site.

It belongs to the Maf family. YhdE subfamily. A divalent metal cation is required as a cofactor.

It is found in the cytoplasm. It catalyses the reaction dTTP + H2O = dTMP + diphosphate + H(+). The enzyme catalyses UTP + H2O = UMP + diphosphate + H(+). In terms of biological role, nucleoside triphosphate pyrophosphatase that hydrolyzes dTTP and UTP. May have a dual role in cell division arrest and in preventing the incorporation of modified nucleotides into cellular nucleic acids. The polypeptide is dTTP/UTP pyrophosphatase (Bordetella avium (strain 197N)).